The primary structure comprises 298 residues: Small ribosomal subunit biogenesis GTPase RsgA 1 (298 aa).

A CP-type G domain is found at 63-224; that stretch reads QTQLVRPPVA…VADTPGFSSY (162 aa). Residues 112-115 and 167-175 each bind GTP; these read AKTD and GQTGAGKST. C248, C253, H255, and C261 together coordinate Zn(2+).

The protein belongs to the TRAFAC class YlqF/YawG GTPase family. RsgA subfamily. In terms of assembly, monomer. Associates with 30S ribosomal subunit, binds 16S rRNA. Zn(2+) serves as cofactor.

The protein resides in the cytoplasm. Functionally, one of several proteins that assist in the late maturation steps of the functional core of the 30S ribosomal subunit. Helps release RbfA from mature subunits. May play a role in the assembly of ribosomal proteins into the subunit. Circularly permuted GTPase that catalyzes slow GTP hydrolysis, GTPase activity is stimulated by the 30S ribosomal subunit. The sequence is that of Small ribosomal subunit biogenesis GTPase RsgA 1 from Lactiplantibacillus plantarum (strain ATCC BAA-793 / NCIMB 8826 / WCFS1) (Lactobacillus plantarum).